A 195-amino-acid polypeptide reads, in one-letter code: Nucleoid occlusion factor SlmA (195 aa).

Positions 7-67 constitute an HTH tetR-type domain; the sequence is TNRRAQILQA…GLIEFIEETL (61 aa). The H-T-H motif DNA-binding region spans 30 to 49; that stretch reads TTAKLAEKVGVSEAALYRHF. Residues 109 to 141 are a coiled coil; the sequence is DALMGEQDRLRARIAKLFERLETQLKQVLRERK.

This sequence belongs to the nucleoid occlusion factor SlmA family. In terms of assembly, homodimer. Interacts with FtsZ.

It localises to the cytoplasm. The protein localises to the nucleoid. Required for nucleoid occlusion (NO) phenomenon, which prevents Z-ring formation and cell division over the nucleoid. Acts as a DNA-associated cell division inhibitor that binds simultaneously chromosomal DNA and FtsZ, and disrupts the assembly of FtsZ polymers. SlmA-DNA-binding sequences (SBS) are dispersed on non-Ter regions of the chromosome, preventing FtsZ polymerization at these regions. This chain is Nucleoid occlusion factor SlmA, found in Alteromonas mediterranea (strain DSM 17117 / CIP 110805 / LMG 28347 / Deep ecotype).